Reading from the N-terminus, the 489-residue chain is UDP-N-acetylmuramate--L-alanine ligase (489 aa).

128–134 (GTHGKTT) serves as a coordination point for ATP.

This sequence belongs to the MurCDEF family.

Its subcellular location is the cytoplasm. The enzyme catalyses UDP-N-acetyl-alpha-D-muramate + L-alanine + ATP = UDP-N-acetyl-alpha-D-muramoyl-L-alanine + ADP + phosphate + H(+). Its pathway is cell wall biogenesis; peptidoglycan biosynthesis. Its function is as follows. Cell wall formation. This Shewanella pealeana (strain ATCC 700345 / ANG-SQ1) protein is UDP-N-acetylmuramate--L-alanine ligase.